A 288-amino-acid polypeptide reads, in one-letter code: 4-diphosphocytidyl-2-C-methyl-D-erythritol kinase (288 aa).

The active site involves lysine 10. An ATP-binding site is contributed by 94–104 (PVAAGLGGGSS). Residue aspartate 136 is part of the active site.

The protein belongs to the GHMP kinase family. IspE subfamily.

The enzyme catalyses 4-CDP-2-C-methyl-D-erythritol + ATP = 4-CDP-2-C-methyl-D-erythritol 2-phosphate + ADP + H(+). It participates in isoprenoid biosynthesis; isopentenyl diphosphate biosynthesis via DXP pathway; isopentenyl diphosphate from 1-deoxy-D-xylulose 5-phosphate: step 3/6. In terms of biological role, catalyzes the phosphorylation of the position 2 hydroxy group of 4-diphosphocytidyl-2C-methyl-D-erythritol. The protein is 4-diphosphocytidyl-2-C-methyl-D-erythritol kinase of Lactiplantibacillus plantarum (strain ATCC BAA-793 / NCIMB 8826 / WCFS1) (Lactobacillus plantarum).